The sequence spans 353 residues: Small ribosomal subunit biogenesis GTPase RsgA (353 aa).

Positions 1–17 (MSKNKLSKGQQRRVNAN) are enriched in polar residues. The disordered stretch occupies residues 1–25 (MSKNKLSKGQQRRVNANHQRRLKTT). Positions 104 to 274 (ASVLTRPDFY…VIDSPGVREF (171 aa)) constitute a CP-type G domain. Residues 160–163 (NKID) and 214–222 (GQSGVGKSS) each bind GTP. Positions 298, 303, 305, and 311 each coordinate Zn(2+).

This sequence belongs to the TRAFAC class YlqF/YawG GTPase family. RsgA subfamily. Monomer. Associates with 30S ribosomal subunit, binds 16S rRNA. Requires Zn(2+) as cofactor.

It localises to the cytoplasm. One of several proteins that assist in the late maturation steps of the functional core of the 30S ribosomal subunit. Helps release RbfA from mature subunits. May play a role in the assembly of ribosomal proteins into the subunit. Circularly permuted GTPase that catalyzes slow GTP hydrolysis, GTPase activity is stimulated by the 30S ribosomal subunit. The sequence is that of Small ribosomal subunit biogenesis GTPase RsgA from Klebsiella pneumoniae (strain 342).